A 674-amino-acid chain; its full sequence is Inorganic pyrophosphatase TTM2 (674 aa).

The region spanning 248–410 is the CYTH domain; it reads SPTYILKSRK…PRTYIEQIQL (163 aa). Disordered regions lie at residues 457-498 and 619-640; these read KNLK…SPAN and RSRL…SKSS. A compositionally biased stretch (basic and acidic residues) spans 484–496; it reads SDRRYEERNHDSP. A compositionally biased stretch (low complexity) spans 623-640; that stretch reads ARTGSSNSGNRGRSSKSS. Residues 650-670 form a helical membrane-spanning segment; the sequence is LPLVLTVAICSIGIIVIKSYI.

It depends on Mg(2+) as a cofactor. As to expression, predominantly expressed in the shoot apices of inflorescences.

The protein localises to the mitochondrion outer membrane. The catalysed reaction is diphosphate + H2O = 2 phosphate + H(+). Exhibits pyrophosphatase activity with stronger affinity for pyrophosphate (PPi), moderate affinity for ATP and ADP, and weak affinity for tripolyphosphate (PPPi). No activity observed toward uridine substrate. Negative regulator of the salicylic acid (SA)-mediated amplification of defense responses against both virulent and avirulent pathogens, including oomycetes (e.g. H.arabidopsidis) and bacteria (e.g. P.syringae). Represses systemic acquired resistance (SAR). The sequence is that of Inorganic pyrophosphatase TTM2 from Arabidopsis thaliana (Mouse-ear cress).